A 343-amino-acid chain; its full sequence is Probable dual-specificity RNA methyltransferase RlmN (343 aa).

Catalysis depends on Glu91, which acts as the Proton acceptor. The region spanning 97 to 326 is the Radical SAM core domain; sequence HPDRITACIS…AEIRREKGSD (230 aa). Cys104 and Cys331 are joined by a disulfide. Residues Cys111, Cys115, and Cys118 each coordinate [4Fe-4S] cluster. Residues 158-159, Ser190, 213-215, and Asn289 contribute to the S-adenosyl-L-methionine site; these read GE and SLH. Cys331 acts as the S-methylcysteine intermediate in catalysis.

This sequence belongs to the radical SAM superfamily. RlmN family. [4Fe-4S] cluster is required as a cofactor.

The protein resides in the cytoplasm. It carries out the reaction adenosine(2503) in 23S rRNA + 2 reduced [2Fe-2S]-[ferredoxin] + 2 S-adenosyl-L-methionine = 2-methyladenosine(2503) in 23S rRNA + 5'-deoxyadenosine + L-methionine + 2 oxidized [2Fe-2S]-[ferredoxin] + S-adenosyl-L-homocysteine. The enzyme catalyses adenosine(37) in tRNA + 2 reduced [2Fe-2S]-[ferredoxin] + 2 S-adenosyl-L-methionine = 2-methyladenosine(37) in tRNA + 5'-deoxyadenosine + L-methionine + 2 oxidized [2Fe-2S]-[ferredoxin] + S-adenosyl-L-homocysteine. In terms of biological role, specifically methylates position 2 of adenine 2503 in 23S rRNA and position 2 of adenine 37 in tRNAs. The sequence is that of Probable dual-specificity RNA methyltransferase RlmN from Thermotoga sp. (strain RQ2).